Here is a 176-residue protein sequence, read N- to C-terminus: ATP-dependent protease subunit HslV (176 aa).

T2 is a catalytic residue. Na(+) contacts are provided by G157, C160, and T163.

This sequence belongs to the peptidase T1B family. HslV subfamily. In terms of assembly, a double ring-shaped homohexamer of HslV is capped on each side by a ring-shaped HslU homohexamer. The assembly of the HslU/HslV complex is dependent on binding of ATP.

The protein localises to the cytoplasm. The catalysed reaction is ATP-dependent cleavage of peptide bonds with broad specificity.. Allosterically activated by HslU binding. Functionally, protease subunit of a proteasome-like degradation complex believed to be a general protein degrading machinery. The protein is ATP-dependent protease subunit HslV of Pseudomonas fluorescens (strain ATCC BAA-477 / NRRL B-23932 / Pf-5).